Here is a 127-residue protein sequence, read N- to C-terminus: Small ribosomal subunit protein uS13 (127 aa).

The interval 97–127 is disordered; it reads PVRGQRTRTNARTRRGGRKTVAGKKKAAAKK. The span at 101–127 shows a compositional bias: basic residues; that stretch reads QRTRTNARTRRGGRKTVAGKKKAAAKK.

It belongs to the universal ribosomal protein uS13 family. In terms of assembly, part of the 30S ribosomal subunit. Forms a loose heterodimer with protein S19. Forms two bridges to the 50S subunit in the 70S ribosome.

Functionally, located at the top of the head of the 30S subunit, it contacts several helices of the 16S rRNA. In the 70S ribosome it contacts the 23S rRNA (bridge B1a) and protein L5 of the 50S subunit (bridge B1b), connecting the 2 subunits; these bridges are implicated in subunit movement. Contacts the tRNAs in the A and P-sites. This chain is Small ribosomal subunit protein uS13, found in Gloeobacter violaceus (strain ATCC 29082 / PCC 7421).